The following is a 614-amino-acid chain: Dihydroxy-acid dehydratase (614 aa).

Position 81 (aspartate 81) interacts with Mg(2+). Cysteine 122 is a [2Fe-2S] cluster binding site. Aspartate 123 and lysine 124 together coordinate Mg(2+). Lysine 124 is modified (N6-carboxylysine). Cysteine 193 serves as a coordination point for [2Fe-2S] cluster. Glutamate 489 is a Mg(2+) binding site. Catalysis depends on serine 515, which acts as the Proton acceptor.

Belongs to the IlvD/Edd family. As to quaternary structure, homodimer. The cofactor is [2Fe-2S] cluster. Requires Mg(2+) as cofactor.

It catalyses the reaction (2R)-2,3-dihydroxy-3-methylbutanoate = 3-methyl-2-oxobutanoate + H2O. It carries out the reaction (2R,3R)-2,3-dihydroxy-3-methylpentanoate = (S)-3-methyl-2-oxopentanoate + H2O. Its pathway is amino-acid biosynthesis; L-isoleucine biosynthesis; L-isoleucine from 2-oxobutanoate: step 3/4. It functions in the pathway amino-acid biosynthesis; L-valine biosynthesis; L-valine from pyruvate: step 3/4. Functionally, functions in the biosynthesis of branched-chain amino acids. Catalyzes the dehydration of (2R,3R)-2,3-dihydroxy-3-methylpentanoate (2,3-dihydroxy-3-methylvalerate) into 2-oxo-3-methylpentanoate (2-oxo-3-methylvalerate) and of (2R)-2,3-dihydroxy-3-methylbutanoate (2,3-dihydroxyisovalerate) into 2-oxo-3-methylbutanoate (2-oxoisovalerate), the penultimate precursor to L-isoleucine and L-valine, respectively. This chain is Dihydroxy-acid dehydratase, found in Hahella chejuensis (strain KCTC 2396).